The following is a 168-amino-acid chain: Cilia- and flagella-associated protein 276 (168 aa).

2 disordered regions span residues 35–61 (AHLA…RDTF) and 149–168 (HTAA…FFST). Polar residues predominate over residues 38–55 (AQQQDPWSRLSSTPTATS).

Microtubule inner protein component of sperm flagellar doublet microtubules. As to expression, predominantly expressed in nervous system tissues, such as the spinal cord, cerebrum, cerebellum, and sciatic nerve.

The protein resides in the cytoplasm. It is found in the cytoskeleton. The protein localises to the cilium axoneme. It localises to the flagellum axoneme. Microtubule inner protein (MIP) part of the dynein-decorated doublet microtubules (DMTs) in cilia axoneme, which is required for motile cilia beating. May play an important role for the maintenance of myelin-axon integrity. May affect intracellular Ca(2+) homeostasis. In Mus musculus (Mouse), this protein is Cilia- and flagella-associated protein 276.